The following is a 366-amino-acid chain: Beta sliding clamp (366 aa).

It belongs to the beta sliding clamp family. Forms a ring-shaped head-to-tail homodimer around DNA which binds and tethers DNA polymerases and other proteins to the DNA. The DNA replisome complex has a single clamp-loading complex (3 tau and 1 each of delta, delta', psi and chi subunits) which binds 3 Pol III cores (1 core on the leading strand and 2 on the lagging strand) each with a beta sliding clamp dimer. Additional proteins in the replisome are other copies of gamma, psi and chi, Ssb, DNA helicase and RNA primase.

The protein resides in the cytoplasm. Functionally, confers DNA tethering and processivity to DNA polymerases and other proteins. Acts as a clamp, forming a ring around DNA (a reaction catalyzed by the clamp-loading complex) which diffuses in an ATP-independent manner freely and bidirectionally along dsDNA. Initially characterized for its ability to contact the catalytic subunit of DNA polymerase III (Pol III), a complex, multichain enzyme responsible for most of the replicative synthesis in bacteria; Pol III exhibits 3'-5' exonuclease proofreading activity. The beta chain is required for initiation of replication as well as for processivity of DNA replication. The sequence is that of Beta sliding clamp (dnaN) from Vibrio cholerae serotype O1 (strain ATCC 39315 / El Tor Inaba N16961).